We begin with the raw amino-acid sequence, 75 residues long: Large ribosomal subunit protein uL30 (75 aa).

This sequence belongs to the universal ribosomal protein uL30 family. Part of the 50S ribosomal subunit.

The sequence is that of Large ribosomal subunit protein uL30 from Roseiflexus castenholzii (strain DSM 13941 / HLO8).